The primary structure comprises 125 residues: Small ribosomal subunit protein bS6 (125 aa).

The disordered stretch occupies residues 97–125 (TEASPMKAAKEERKPLAEVENNDFEDAEE). Positions 104–113 (AAKEERKPLA) are enriched in basic and acidic residues. The segment covering 116–125 (ENNDFEDAEE) has biased composition (acidic residues).

The protein belongs to the bacterial ribosomal protein bS6 family.

Binds together with bS18 to 16S ribosomal RNA. The chain is Small ribosomal subunit protein bS6 from Haemophilus influenzae (strain PittEE).